Consider the following 382-residue polypeptide: Pyrimidine monooxygenase RutA (382 aa).

FMN is bound by residues 68-69 (IK), asparagine 134, glutamate 143, 159-160 (RY), and serine 209.

This sequence belongs to the NtaA/SnaA/DszA monooxygenase family. RutA subfamily.

The enzyme catalyses uracil + FMNH2 + NADH + O2 = (Z)-3-ureidoacrylate + FMN + NAD(+) + H2O + H(+). The catalysed reaction is thymine + FMNH2 + NADH + O2 = (Z)-2-methylureidoacrylate + FMN + NAD(+) + H2O + H(+). Functionally, catalyzes the pyrimidine ring opening between N-3 and C-4 by an unusual flavin hydroperoxide-catalyzed mechanism, adding oxygen atoms in the process to yield ureidoacrylate peracid, that immediately reacts with FMN forming ureidoacrylate and FMN-N(5)-oxide. The FMN-N(5)-oxide reacts spontaneously with NADH to produce FMN. Requires the flavin reductase RutF to regenerate FMN in vivo. The chain is Pyrimidine monooxygenase RutA from Escherichia coli O45:K1 (strain S88 / ExPEC).